We begin with the raw amino-acid sequence, 572 residues long: Urease subunit alpha (572 aa).

Positions 136 to 572 (GGIDTHIHWI…VPLAQRYFLF (437 aa)) constitute a Urease domain. Positions 141, 143, and 224 each coordinate Ni(2+). Lysine 224 bears the N6-carboxylysine mark. Substrate is bound at residue histidine 226. Residues histidine 253 and histidine 279 each contribute to the Ni(2+) site. Catalysis depends on histidine 327, which acts as the Proton donor. A Ni(2+)-binding site is contributed by aspartate 367.

This sequence belongs to the metallo-dependent hydrolases superfamily. Urease alpha subunit family. In terms of assembly, heterotrimer of UreA (gamma), UreB (beta) and UreC (alpha) subunits. Three heterotrimers associate to form the active enzyme. The cofactor is Ni cation. In terms of processing, carboxylation allows a single lysine to coordinate two nickel ions.

The protein localises to the cytoplasm. The enzyme catalyses urea + 2 H2O + H(+) = hydrogencarbonate + 2 NH4(+). It participates in nitrogen metabolism; urea degradation; CO(2) and NH(3) from urea (urease route): step 1/1. This chain is Urease subunit alpha, found in Actinobacillus pleuropneumoniae serotype 3 (strain JL03).